Reading from the N-terminus, the 538-residue chain is Probable inorganic phosphate transporter 1-4 (538 aa).

Topologically, residues 1 to 23 (MAGELKVLNALDSAKTQWYHFTA) are cytoplasmic. A helical transmembrane segment spans residues 24 to 44 (IVIAGMGFFTDAYDLFSISLV). Over 45–69 (TKLLGRIYYFNPASKSPGSLPPNVS) the chain is Extracellular. The helical transmembrane segment at 70 to 90 (AAVNGVAFCGTLAGQLFFGWL) threads the bilayer. The Cytoplasmic portion of the chain corresponds to 91–98 (GDKMGRKK). A helical membrane pass occupies residues 99–119 (VYGMTLMLMVICCLASGLSFG). The Extracellular portion of the chain corresponds to 120–123 (SSAK). The chain crosses the membrane as a helical span at residues 124-144 (GVMATLCFFRFWLGFGIGGDY). Residues 145 to 163 (PLSATIMSEYANKRTRGAF) are Cytoplasmic-facing. Residues 164–184 (IAAVFAMQGFGNLTGGIVAII) form a helical membrane-spanning segment. Residues 185-210 (VSAAFKSRFDAPAYRDDRTGSTVPQA) lie on the Extracellular side of the membrane. A helical transmembrane segment spans residues 211 to 231 (DYAWRIVLMFGAIPALLTYYW). The Cytoplasmic portion of the chain corresponds to 232–294 (RMKMPETARY…RQFLRRHGRH (63 aa)). The helical transmembrane segment at 295 to 315 (LLGTTVCWFVLDIAFYSSNLF) threads the bilayer. Over 316-346 (QKDIYTAVQWLPKADTMSALEEMFKISRAQT) the chain is Extracellular. A helical membrane pass occupies residues 347–367 (LVALCGTIPGYWFTVFFIDII). The Cytoplasmic portion of the chain corresponds to 368–369 (GR). A helical transmembrane segment spans residues 370–390 (FVIQLGGFFFMTAFMLGLAVP). The Extracellular segment spans residues 391 to 396 (YHHWTT). A helical transmembrane segment spans residues 397–417 (PGNHIGFVVMYAFTFFFANFG). Over 418-440 (PNSTTFIVPAEIFPARLRSTCHG) the chain is Cytoplasmic. A helical transmembrane segment spans residues 441 to 461 (ISAAAGKAGAIVGSFGFLYAA). Residues 462–481 (QSTDASKTDAGYPPGIGVRN) lie on the Extracellular side of the membrane. The chain crosses the membrane as a helical span at residues 482 to 502 (SLFFLAGCNVIGFFFTFLVPE). The Cytoplasmic portion of the chain corresponds to 503–538 (SKGKSLEELSGENEDDDDVPEAPATADHRTAPAPPA). A disordered region spans residues 507–538 (SLEELSGENEDDDDVPEAPATADHRTAPAPPA). Residues 511 to 522 (LSGENEDDDDVP) show a composition bias toward acidic residues.

It belongs to the major facilitator superfamily. Phosphate:H(+) symporter (TC 2.A.1.9) family. Expressed at low levels in roots.

It localises to the membrane. Functionally, high-affinity transporter for external inorganic phosphate. The protein is Probable inorganic phosphate transporter 1-4 (PHT1-4) of Oryza sativa subsp. japonica (Rice).